The chain runs to 590 residues: Aspartate--tRNA(Asp/Asn) ligase (590 aa).

Glutamate 176 contacts L-aspartate. The segment at 200–203 (QLFK) is aspartate. Arginine 222 and histidine 451 together coordinate L-aspartate. An ATP-binding site is contributed by 222-224 (RDE). Glutamate 485 contributes to the ATP binding site. Residue arginine 492 participates in L-aspartate binding. An ATP-binding site is contributed by 537–540 (GIDR).

It belongs to the class-II aminoacyl-tRNA synthetase family. Type 1 subfamily. Homodimer.

The protein localises to the cytoplasm. The enzyme catalyses tRNA(Asx) + L-aspartate + ATP = L-aspartyl-tRNA(Asx) + AMP + diphosphate. Aspartyl-tRNA synthetase with relaxed tRNA specificity since it is able to aspartylate not only its cognate tRNA(Asp) but also tRNA(Asn). Reaction proceeds in two steps: L-aspartate is first activated by ATP to form Asp-AMP and then transferred to the acceptor end of tRNA(Asp/Asn). In Ehrlichia ruminantium (strain Gardel), this protein is Aspartate--tRNA(Asp/Asn) ligase.